The primary structure comprises 150 residues: Bcl-2-interacting killer (150 aa).

The BH3 motif lies at 51-65 (VALRLACIGDEMDLC). Residues 127–147 (PGQLFPMVLLVFLLLGGAWYL) traverse the membrane as a helical segment. The interval 127–148 (PGQLFPMVLLVFLLLGGAWYLQ) is leucine-zipper.

Interacts with RHBDL4/RHBDD1. Interacts with BCL2L10/BCL-B. Post-translationally, proteolytically cleaved by RHBDL4/RHBDD1. RHBDL4/RHBDD1-induced cleavage is a necessary step prior its degradation by the proteosome-dependent mechanism. Ubiquitinated by the ECS(ASB11) complex in response to endoplasmic reticulum stress, leading to substrate recognition by the segregase p97/VCP and degradation by the proteasome. As to expression, expressed in testis, kidney, liver, lung and heart.

Its subcellular location is the endomembrane system. It localises to the mitochondrion membrane. Functionally, accelerates programmed cell death. Binding to the apoptosis repressors Bcl-X(L), BHRF1 or Bcl-2 suppresses this death-promoting activity. The chain is Bcl-2-interacting killer (Bik) from Mus musculus (Mouse).